The following is a 752-amino-acid chain: Primary amine oxidase (752 aa).

An N-terminal signal peptide occupies residues 1–27 (MAILSPRKTALALAVALSCAWQSPAFA). Substrate-binding positions include 408–419 (YLDSGDYGMGTL) and 490–495 (VGNYDY). The active-site Proton acceptor is the Asp-410. The active-site Schiff-base intermediate with substrate; via topaquinone is Tyr-493. Tyr-493 is modified (2',4',5'-topaquinone). Residues His-551 and His-553 each contribute to the Cu cation site. The Ca(2+) site is built by Asp-560, Leu-561, Asp-562, Glu-600, Tyr-694, Asp-697, Glu-699, and Asp-705. A Mn(2+)-binding site is contributed by Asp-560. Asp-562 provides a ligand contact to Mn(2+). A Mn(2+)-binding site is contributed by Asp-705. Residue His-716 coordinates Cu cation.

It belongs to the copper/topaquinone oxidase family. Homodimer. It depends on Cu cation as a cofactor. The cofactor is Ca(2+). Requires L-topaquinone as cofactor. Mn(2+) is required as a cofactor. In terms of processing, topaquinone (TPQ) is generated by copper-dependent autoxidation of a specific tyrosyl residue.

Its subcellular location is the periplasm. It carries out the reaction a primary methyl amine + O2 + H2O = an aldehyde + H2O2 + NH4(+). Its function is as follows. Active on tyramine, tryptamine, beta-phenethylamine and dopamine. This chain is Primary amine oxidase (maoA), found in Klebsiella michiganensis (strain ATCC 8724 / DSM 4798 / JCM 20051 / NBRC 3318 / NRRL B-199 / KCTC 1686 / BUCSAV 143 / CCM 1901).